The sequence spans 618 residues: UvrABC system protein C (618 aa).

One can recognise a GIY-YIG domain in the interval 13–92 (DKPGVYLMKN…IKKYRPKYNI (80 aa)). In terms of domain architecture, UVR spans 204–239 (LDIVENFKLNMEKAAGNLEFEKAAMLRDKINIIEKI).

Belongs to the UvrC family. As to quaternary structure, interacts with UvrB in an incision complex.

The protein localises to the cytoplasm. Its function is as follows. The UvrABC repair system catalyzes the recognition and processing of DNA lesions. UvrC both incises the 5' and 3' sides of the lesion. The N-terminal half is responsible for the 3' incision and the C-terminal half is responsible for the 5' incision. This Clostridium botulinum (strain 657 / Type Ba4) protein is UvrABC system protein C.